Here is a 778-residue protein sequence, read N- to C-terminus: Endonuclease MutS2 (778 aa).

An ATP-binding site is contributed by 328–335 (GPNTGGKT). Positions 703-778 (LDLRGKRYEE…GSGCTIANLG (76 aa)) constitute a Smr domain.

Belongs to the DNA mismatch repair MutS family. MutS2 subfamily. As to quaternary structure, homodimer. Binds to stalled ribosomes, contacting rRNA.

In terms of biological role, endonuclease that is involved in the suppression of homologous recombination and thus may have a key role in the control of bacterial genetic diversity. Functionally, acts as a ribosome collision sensor, splitting the ribosome into its 2 subunits. Detects stalled/collided 70S ribosomes which it binds and splits by an ATP-hydrolysis driven conformational change. Acts upstream of the ribosome quality control system (RQC), a ribosome-associated complex that mediates the extraction of incompletely synthesized nascent chains from stalled ribosomes and their subsequent degradation. Probably generates substrates for RQC. This chain is Endonuclease MutS2, found in Streptococcus equi subsp. equi (strain 4047).